Reading from the N-terminus, the 311-residue chain is Tyrosine recombinase XerC (311 aa).

The region spanning 14–100 is the Core-binding (CB) domain; the sequence is ESLNETAKKF…SLRTFYKVLL (87 aa). The Tyr recombinase domain occupies 121–303; it reads EVPKNFRINE…SKEKIKEVYR (183 aa). Active-site residues include Arg-163, Lys-187, His-255, Arg-258, and His-281. Tyr-290 serves as the catalytic O-(3'-phospho-DNA)-tyrosine intermediate.

This sequence belongs to the 'phage' integrase family. XerC subfamily. Forms a cyclic heterotetrameric complex composed of two molecules of XerC and two molecules of XerD.

Its subcellular location is the cytoplasm. Its function is as follows. Site-specific tyrosine recombinase, which acts by catalyzing the cutting and rejoining of the recombining DNA molecules. The XerC-XerD complex is essential to convert dimers of the bacterial chromosome into monomers to permit their segregation at cell division. It also contributes to the segregational stability of plasmids. The chain is Tyrosine recombinase XerC from Leptospira interrogans serogroup Icterohaemorrhagiae serovar copenhageni (strain Fiocruz L1-130).